The chain runs to 534 residues: Pentatricopeptide repeat-containing protein At5g08305 (534 aa).

11 PPR repeats span residues 41–71, 72–106, 107–141, 142–172, 173–203, 204–238, 240–274, 275–305, 308–342, 343–377, and 378–408; these read PFVS…LSDP, PNYG…GLLP, DHMT…GLEW, DLFI…MPHK, NLVT…MSER, DVVT…GSSK, NEVT…HLPL, TVIL…ASVK, DALM…KIDP, DEIT…GAEP, and KSEH…MPIK. Residues 413–488 form a type E motif region; it reads MLGALLNGCI…IAGHSILDLD (76 aa). The segment at 489 to 519 is type E(+) motif; that stretch reads GTRHRFIAHDKTHFHSDKIYAVLQLTGAWMN.

Belongs to the PPR family. PCMP-E subfamily.

This is Pentatricopeptide repeat-containing protein At5g08305 (PCMP-E105) from Arabidopsis thaliana (Mouse-ear cress).